We begin with the raw amino-acid sequence, 164 residues long: Serine/arginine-rich splicing factor 3 (164 aa).

An N-acetylmethionine modification is found at methionine 1. The tract at residues 1–90 (MHRDSCPLDC…SNGEKRSRNR (90 aa)) is sufficient for interaction with NXF1 and SRSP. Serine 5 carries the post-translational modification Phosphoserine. Residues 10–83 (CKVYVGNLGN…CRVRVELSNG (74 aa)) form the RRM domain. Lysine 23 carries the post-translational modification N6-acetyllysine. The interval 81 to 164 (SNGEKRSRNR…RSRSRSNERK (84 aa)) is disordered. Positions 107-128 (RSPPPRRRSPRRRSFSRSRSRS) are enriched in basic residues. Residues 119-133 (RSFSRSRSRSLSRDR) form a B-1 repeat. The interval 119–164 (RSFSRSRSRSLSRDRRRERSLSRERNHKPSRSFSRSRSRSRSNERK) is 2 X approximate repeats, basic. Over residues 129–142 (LSRDRRRERSLSRE) the composition is skewed to basic and acidic residues. Over residues 143-158 (RNHKPSRSFSRSRSRS) the composition is skewed to basic residues. The stretch at 149–164 (RSFSRSRSRSRSNERK) is one B-2 repeat.

This sequence belongs to the splicing factor SR family. In terms of assembly, interacts with CPSF6. Interacts with RBMY1A1. Interacts with SREK1/SFRS12. Interacts with NXF1. Interacts with YTHDC1, leading to recruitment to RNA elements adjacent to m6A sites. Interacts with SRSP; increases SRSF3 binding to specific exons. Post-translationally, phosphorylated by CLK1, CLK2, CLK3 and CLK4. Extensively phosphorylated on serine residues in the RS domain.

It localises to the nucleus. Its subcellular location is the nucleus speckle. It is found in the cytoplasm. Its function is as follows. Splicing factor, which binds the consensus motif 5'-C[ACU][AU]C[ACU][AC]C-3' within pre-mRNA and promotes specific exons inclusion during alternative splicing. Interaction with YTHDC1, a RNA-binding protein that recognizes and binds N6-methyladenosine (m6A)-containing RNAs, promotes recruitment of SRSF3 to its mRNA-binding elements adjacent to m6A sites within exons. Also functions as an adapter involved in mRNA nuclear export. Binds mRNA which is thought to be transferred to the NXF1-NXT1 heterodimer for export (TAP/NXF1 pathway); enhances NXF1-NXT1 RNA-binding activity. Involved in nuclear export of m6A-containing mRNAs via interaction with YTHDC1: interaction with YTHDC1 facilitates m6A-containing mRNA-binding to both SRSF3 and NXF1, promoting mRNA nuclear export. The polypeptide is Serine/arginine-rich splicing factor 3 (SRSF3) (Bos taurus (Bovine)).